A 304-amino-acid chain; its full sequence is Secreted mono- and diacylglycerol lipase MDL3 (304 aa).

Positions 1-19 (MIVGPVISLLLSYFVLVSG) are cleaved as a signal peptide. A disulfide bridge links Cys55 with Cys297. The N-linked (GlcNAc...) asparagine glycan is linked to Asn161. Catalysis depends on Ser171, which acts as the Nucleophile. Residues Asp228 and His281 contribute to the active site.

This sequence belongs to the AB hydrolase superfamily. Lipase family. Class 3 subfamily.

It localises to the secreted. The protein resides in the cell wall. The catalysed reaction is a monoacylglycerol + H2O = glycerol + a fatty acid + H(+). The enzyme catalyses a diacylglycerol + H2O = a monoacylglycerol + a fatty acid + H(+). Secreted lipase involved in Dandruff and seborrheic dermatitis (D/SD) probably via lipase-mediated breakdown of sebaceous lipids and release of irritating free fatty acids. Shows activity against monoglyceride and diglyceride substrates, but not triglyceride substrates and does not exhibit regio-selective production of diacylglycerols. Hydrolyzes distearin, dilinolein, dipalmitoylglycerol and dipalmitolein. Cleaves oleic acid from 1,2 isomers of diolein on both the 1 and the 2 position of the glycerol backbone, resulting mainly in free fatty acids but no monoolein is detected. Shows activity on monoolein and liberates mostly free fatty acids, but can also perform the reverse reaction and produce diolein. In Malassezia globosa (strain ATCC MYA-4612 / CBS 7966) (Dandruff-associated fungus), this protein is Secreted mono- and diacylglycerol lipase MDL3.